Reading from the N-terminus, the 250-residue chain is Putative inner dynein arm light chain, axonemal (250 aa).

Residues 168–250 adopt a coiled-coil conformation; sequence MRKALQAHEE…QLEGITAPKK (83 aa).

The protein belongs to the inner dynein arm light chain family.

The protein resides in the cell projection. The protein localises to the cilium. It localises to the dynein axonemal particle. Functionally, may play a dynamic role in flagellar motility. This chain is Putative inner dynein arm light chain, axonemal, found in Drosophila melanogaster (Fruit fly).